The following is a 76-amino-acid chain: ATP synthase subunit 9, mitochondrial (76 aa).

Met1 carries the N-formylmethionine modification. Transmembrane regions (helical) follow at residues 14-34 (ISTI…AALI) and 52-72 (ILGF…SFLL).

This sequence belongs to the ATPase C chain family. In terms of assembly, F-type ATPases have 2 components, CF(1) - the catalytic core - and CF(0) - the membrane proton channel. In yeast, the dimeric form of ATP synthase consists of 18 polypeptides: alpha, beta, gamma, delta, epsilon, 4 (B), 5 (OSCP), 6 (A), 8, 9 (C), d, E (Tim11), f, g, h, i, j and k.

The protein resides in the mitochondrion membrane. Mitochondrial membrane ATP synthase (F(1)F(0) ATP synthase or Complex V) produces ATP from ADP in the presence of a proton gradient across the membrane which is generated by electron transport complexes of the respiratory chain. F-type ATPases consist of two structural domains, F(1) - containing the extramembraneous catalytic core and F(0) - containing the membrane proton channel, linked together by a central stalk and a peripheral stalk. During catalysis, ATP synthesis in the catalytic domain of F(1) is coupled via a rotary mechanism of the central stalk subunits to proton translocation. Part of the complex F(0) domain. A homomeric c-ring of probably 10 subunits is part of the complex rotary element. The sequence is that of ATP synthase subunit 9, mitochondrial (ATP9) from Saccharomyces paradoxus (Yeast).